Here is a 580-residue protein sequence, read N- to C-terminus: Tyrosyl-DNA phosphodiesterase 1 (580 aa).

The tract at residues 65-117 (ATNKEQEAHSSSSKPAVTAPVASGSSSSGSLDTNPSGSSASGPAASQDTSNLA) is disordered. Residues 87–110 (SGSSSSGSLDTNPSGSSASGPAAS) are compositionally biased toward low complexity. His248 acts as the Nucleophile in catalysis. Lys250 is a binding site for substrate. Residues 387–390 (SIGS) form an interaction with DNA region. His479 acts as the Proton donor/acceptor in catalysis. Position 481 (Lys481) interacts with substrate.

This sequence belongs to the tyrosyl-DNA phosphodiesterase family. Expressed in the body and at higher levels in the head. Expressed in the delaminating neuroblasts and a few ganglion mother cells in stage 11-14 embryonic central nervous system. Weak expression is seen in gonads at stage 16. Expressed in the brain; expression is regulated by DIP2.

The protein localises to the nucleus. It localises to the cytoplasm. DNA repair enzyme that can remove a variety of covalent adducts from DNA through hydrolysis of a 3'-phosphodiester bond, giving rise to DNA with a free 3' phosphate. Catalyzes the hydrolysis of dead-end complexes between DNA and the topoisomerase I active site tyrosine residue. Hydrolyzes 3'-phosphoglycolates on protruding 3' ends on DNA double-strand breaks due to DNA damage by radiation and free radicals. Acts on blunt-ended double-strand DNA breaks and on single-stranded DNA. May have low 3'exonuclease activity and may be able to remove a single nucleoside from the 3'end of DNA and RNA molecules with 3'hydroxyl groups. Has no exonuclease activity towards DNA or RNA with a 3'phosphate. Required for normal polarization of epidermal cells, correct subcellular location of the Crb complex to the apical lateral membrane, and for normal neuronal development during embryonic development. Contributes to maintenance of epithelial cells in response to topoisomerase-1-mediated and oxidative DNA damage. Required for precise axonal bifurcation in mushroom body neurons. Required for maintenance of normal neuronal function. The polypeptide is Tyrosyl-DNA phosphodiesterase 1 (Drosophila melanogaster (Fruit fly)).